Consider the following 458-residue polypeptide: NADH-quinone oxidoreductase subunit N (458 aa).

14 consecutive transmembrane segments (helical) span residues Leu-2–Leu-22, Ile-30–Ser-50, Gly-62–Ile-82, Ala-93–Ile-113, Phe-118–Phe-138, Phe-153–Phe-173, Leu-196–Leu-216, Phe-235–Ile-255, Ile-261–Ala-281, Leu-290–Asn-310, Leu-319–Phe-339, Ile-361–Phe-381, Phe-397–Val-417, and Leu-438–Phe-458.

The protein belongs to the complex I subunit 2 family. NDH-1 is composed of 14 different subunits. Subunits NuoA, H, J, K, L, M, N constitute the membrane sector of the complex.

The protein resides in the cell inner membrane. The enzyme catalyses a quinone + NADH + 5 H(+)(in) = a quinol + NAD(+) + 4 H(+)(out). In terms of biological role, NDH-1 shuttles electrons from NADH, via FMN and iron-sulfur (Fe-S) centers, to quinones in the respiratory chain. The immediate electron acceptor for the enzyme in this species is believed to be ubiquinone. Couples the redox reaction to proton translocation (for every two electrons transferred, four hydrogen ions are translocated across the cytoplasmic membrane), and thus conserves the redox energy in a proton gradient. The protein is NADH-quinone oxidoreductase subunit N of Rickettsia typhi (strain ATCC VR-144 / Wilmington).